The primary structure comprises 179 residues: MLKPNNSWMWYFDLKDNSLMLDLGSDMVFRVGIPAKHLIPSASEQCEFTVDDASIFQNYKENVSHLEISEPRKAELALNAVAASRFHKPMMPKSWFFDTQSVSCDPENSDIVTLQTPLGMAKFIVIENSGCASLCMMVDVEPLALSSTKEIRFCDTIKVMNNRITAYEEDAILNLALVG.

The protein belongs to the ZapC family. As to quaternary structure, interacts directly with FtsZ.

It is found in the cytoplasm. Functionally, contributes to the efficiency of the cell division process by stabilizing the polymeric form of the cell division protein FtsZ. Acts by promoting interactions between FtsZ protofilaments and suppressing the GTPase activity of FtsZ. The polypeptide is Cell division protein ZapC (Photobacterium profundum (strain SS9)).